Consider the following 465-residue polypeptide: Glutamate--tRNA ligase 2 (465 aa).

Positions 8-18 (PSPTGLMHLGN) match the 'HIGH' region motif. The 'KMSKS' region motif lies at 249–253 (PLSKR). An ATP-binding site is contributed by Lys252.

This sequence belongs to the class-I aminoacyl-tRNA synthetase family. Glutamate--tRNA ligase type 1 subfamily. As to quaternary structure, monomer.

It is found in the cytoplasm. The catalysed reaction is tRNA(Glu) + L-glutamate + ATP = L-glutamyl-tRNA(Glu) + AMP + diphosphate. Its function is as follows. Catalyzes the attachment of glutamate to tRNA(Glu) in a two-step reaction: glutamate is first activated by ATP to form Glu-AMP and then transferred to the acceptor end of tRNA(Glu). The sequence is that of Glutamate--tRNA ligase 2 from Coxiella burnetii (strain CbuK_Q154) (Coxiella burnetii (strain Q154)).